Reading from the N-terminus, the 503-residue chain is MATGELALVSSLFIVVVFLLLGAVAREASALTRHDFPEGFVFGAGSSAFQVEGAAAEDGRKPSIWDTFINQGYMPDGSNADVSADQYHHYKEDVKLMYDMGLDAYRFSIAWPRLIPDGRGEINPKGLEYYNNLIDELIMHGIQPHVTIYHFDLPQALQDEYGGILSPRFIEDYSAYAEVCFKNFGDRVKHWATFNQPNIEPIGGFDAGDRPPRRCSYPFGTNCTGGDSSTEPYIVAHHLLLAHASAVSIYRQKYQAIQGGQIGITLMVRWHEPYTDKTADAAAAIRMNEFHIGWFLHPLVHGDYPPVMRSRVGVRLPSITASDSEKIRGSFDFIGINHYYVIFVQSIDANEQKLRDYYIDAGVQGEDDTENIQCHSWSLGKVLNHLKLEYGNPPVMIHENGYSDSPDIFGKINYNDDFRSAFLQGYLEALYLSVRNGSNTRGYFVWSMFDMFEFLYGYRLRFGLCGVDFTAAARTRYLKNSARWYSGFLRGGELRPEKSYATL.

The N-terminal stretch at 1–30 (MATGELALVSSLFIVVVFLLLGAVAREASA) is a signal peptide. A beta-D-glucoside is bound by residues glutamine 50, histidine 150, and 195–196 (NQ). The cysteines at positions 215 and 223 are disulfide-linked. Asparagine 222 carries N-linked (GlcNAc...) asparagine glycosylation. A beta-D-glucoside is bound by residues tyrosine 339 and glutamate 399. Glutamate 399 acts as the Nucleophile in catalysis. A glycan (N-linked (GlcNAc...) asparagine) is linked at asparagine 436. A beta-D-glucoside contacts are provided by residues tryptophan 446, 453–454 (EF), and phenylalanine 462.

It belongs to the glycosyl hydrolase 1 family.

This is Probable inactive beta-glucosidase 33 (BGLU33) from Oryza sativa subsp. japonica (Rice).